A 618-amino-acid polypeptide reads, in one-letter code: UvrABC system protein C (618 aa).

Positions Asp-13–Ile-92 constitute a GIY-YIG domain. A UVR domain is found at Leu-204 to Ile-239.

It belongs to the UvrC family. As to quaternary structure, interacts with UvrB in an incision complex.

It localises to the cytoplasm. Its function is as follows. The UvrABC repair system catalyzes the recognition and processing of DNA lesions. UvrC both incises the 5' and 3' sides of the lesion. The N-terminal half is responsible for the 3' incision and the C-terminal half is responsible for the 5' incision. The chain is UvrABC system protein C from Clostridium botulinum (strain Kyoto / Type A2).